We begin with the raw amino-acid sequence, 218 residues long: MSDNDELQQIAHLRREYTKGGLRRRDLPADPLTLFERWLSQACEAKLADPTAMVVATVDEHGQPYQRIVLLKHYDEKGMVFYTNLGSRKAHQIENNPRVSLLFPWHTLERQVMVIGKAERLSTLEVMKYFHSRPRDSQIGSWVSKQSSRISARGILESKFLELKQKFQQGEVPLPSFWGGFRVSLEQIEFWQGGEHRLHDRFLYQRENDAWKIDRLAP.

Substrate-binding positions include Arg-14–Tyr-17 and Lys-72. FMN-binding positions include Arg-67–Lys-72, Tyr-82–Thr-83, Arg-88, Lys-89, and Gln-111. Substrate contacts are provided by Tyr-129, Arg-133, and Ser-137. Residues Gln-146–Ser-147 and Trp-191 contribute to the FMN site. Arg-197–His-199 provides a ligand contact to substrate. Arg-201 lines the FMN pocket.

It belongs to the pyridoxamine 5'-phosphate oxidase family. Homodimer. FMN serves as cofactor.

The enzyme catalyses pyridoxamine 5'-phosphate + O2 + H2O = pyridoxal 5'-phosphate + H2O2 + NH4(+). The catalysed reaction is pyridoxine 5'-phosphate + O2 = pyridoxal 5'-phosphate + H2O2. Its pathway is cofactor metabolism; pyridoxal 5'-phosphate salvage; pyridoxal 5'-phosphate from pyridoxamine 5'-phosphate: step 1/1. It functions in the pathway cofactor metabolism; pyridoxal 5'-phosphate salvage; pyridoxal 5'-phosphate from pyridoxine 5'-phosphate: step 1/1. Functionally, catalyzes the oxidation of either pyridoxine 5'-phosphate (PNP) or pyridoxamine 5'-phosphate (PMP) into pyridoxal 5'-phosphate (PLP). The chain is Pyridoxine/pyridoxamine 5'-phosphate oxidase from Escherichia coli O157:H7.